Here is a 352-residue protein sequence, read N- to C-terminus: 3-isopropylmalate dehydrogenase (352 aa).

76–89 (GPKWENLPHEHKPE) contributes to the NAD(+) binding site. 4 residues coordinate substrate: arginine 96, arginine 106, arginine 134, and aspartate 219. Residues aspartate 219, aspartate 243, and aspartate 247 each coordinate Mg(2+). An NAD(+)-binding site is contributed by 276 to 288 (GSAPDIAGQNKAN).

Belongs to the isocitrate and isopropylmalate dehydrogenases family. LeuB type 1 subfamily. As to quaternary structure, homodimer. Mg(2+) serves as cofactor. Mn(2+) is required as a cofactor.

It localises to the cytoplasm. It catalyses the reaction (2R,3S)-3-isopropylmalate + NAD(+) = 4-methyl-2-oxopentanoate + CO2 + NADH. It functions in the pathway amino-acid biosynthesis; L-leucine biosynthesis; L-leucine from 3-methyl-2-oxobutanoate: step 3/4. Catalyzes the oxidation of 3-carboxy-2-hydroxy-4-methylpentanoate (3-isopropylmalate) to 3-carboxy-4-methyl-2-oxopentanoate. The product decarboxylates to 4-methyl-2 oxopentanoate. The chain is 3-isopropylmalate dehydrogenase from Chlorobium chlorochromatii (strain CaD3).